The chain runs to 65 residues: Antimicrobial peptide THP1 (65 aa).

An N-terminal signal peptide occupies residues 1–25 (MRIVYLLFPFILLLAQGAAGSSLAL). 3 cysteine pairs are disulfide-bonded: C31–C53, C38–C59, and C43–C60. The propeptide occupies 61–65 (KTLLG).

This sequence belongs to the beta-defensin family.

It localises to the secreted. In terms of biological role, bactericidal activity; inhibits S.aureus and E.coli. In Meleagris gallopavo (Wild turkey), this protein is Antimicrobial peptide THP1.